The chain runs to 1219 residues: Protein jagged-1 (1219 aa).

An N-terminal signal peptide occupies residues 1 to 33 (MRSPRTRGRPGRPLSLLLALLCALRAKVCGASG). Residues 34–1067 (QFELEILSMQ…QRRPLKNRTD (1034 aa)) are Extracellular-facing. Asparagine 143 carries N-linked (GlcNAc...) asparagine glycosylation. Residues 185-229 (VTCDDHYYGFGCNKFCRPRDDFFGHYACDQNGNKTCMEGWMGPEC) enclose the DSL domain. 2 disulfides stabilise this stretch: cysteine 187–cysteine 196 and cysteine 200–cysteine 212. Positions 199 to 207 (FCRPRDDFF) are important for interaction with NOTCH1. The N-linked (GlcNAc...) asparagine glycan is linked to asparagine 217. Intrachain disulfides connect cysteine 220-cysteine 229, cysteine 234-cysteine 245, cysteine 238-cysteine 251, cysteine 253-cysteine 262, cysteine 265-cysteine 276, cysteine 271-cysteine 282, cysteine 284-cysteine 293, cysteine 300-cysteine 312, cysteine 306-cysteine 322, cysteine 324-cysteine 333, cysteine 340-cysteine 351, cysteine 345-cysteine 360, cysteine 362-cysteine 371, cysteine 378-cysteine 389, cysteine 383-cysteine 398, cysteine 400-cysteine 409, cysteine 416-cysteine 427, cysteine 421-cysteine 436, cysteine 438-cysteine 447, cysteine 454-cysteine 464, cysteine 458-cysteine 473, cysteine 475-cysteine 484, cysteine 491-cysteine 502, cysteine 496-cysteine 511, cysteine 513-cysteine 522, cysteine 529-cysteine 540, cysteine 534-cysteine 549, cysteine 551-cysteine 560, cysteine 578-cysteine 605, cysteine 599-cysteine 615, cysteine 617-cysteine 626, cysteine 633-cysteine 644, cysteine 638-cysteine 653, cysteine 655-cysteine 664, cysteine 671-cysteine 682, cysteine 676-cysteine 691, cysteine 693-cysteine 702, cysteine 709-cysteine 720, cysteine 714-cysteine 729, and cysteine 731-cysteine 740. In terms of domain architecture, EGF-like 1 spans 230-263 (NKAICRQGCSPKHGSCKLPGDCRCQYGWQGLYCD). Residues 264–294 (KCIPHPGCVHGTCNEPWQCLCETNWGGQLCD) enclose the EGF-like 2; atypical domain. EGF-like domains are found at residues 296–334 (DLNYCGTHQPCLNRGTCSNTGPDKYQCSCPEGYSGPNCE) and 336–372 (AEHACLSDPCHNRGSCKETSSGFECECSPGWTGPTCS). The region spanning 374 to 410 (NIDDCSPNNCSHGGTCQDLVNGFKCVCPPQWTGKTCQ) is the EGF-like 5; calcium-binding domain. Asparagine 382 carries N-linked (GlcNAc...) asparagine glycosylation. In terms of domain architecture, EGF-like 6; calcium-binding spans 412–448 (DANECEAKPCVNARSCKNLIASYYCDCLPGWMGQNCD). The EGF-like 7; calcium-binding domain maps to 450-485 (NINDCLGQCQNDASCRDLVNGYRCICPPGYAGDHCE). The EGF-like 8; calcium-binding domain occupies 487–523 (DIDECASNPCLNGGHCQNEINRFQCLCPTGFSGNLCQ). EGF-like domains lie at 525-561 (DIDYCEPNPCQNGAQCYNRASDYFCKCPEDYEGKNCS) and 586-627 (DTPE…TYCH). N-linked (GlcNAc...) asparagine glycosylation is present at asparagine 559. The EGF-like 11; calcium-binding domain occupies 629-665 (NINDCEGNPCTNGGTCIDGVNSYKCICSDGWEGAHCE). Residues 667–703 (NINDCSQNPCHYGGTCRDLVNDFYCDCKNGWKGKTCH) form the EGF-like 12; calcium-binding domain. EGF-like domains follow at residues 705–741 (RDSQCDEATCNNGGTCYDEVDTFKCMCPGGWEGTTCN) and 744–780 (RNSSCLPNPCHNGGTCVVNGDSFTCVCKEGWEGPICT). A glycan (N-linked (GlcNAc...) asparagine) is linked at asparagine 745. Disulfide bonds link cysteine 748/cysteine 759, cysteine 753/cysteine 768, cysteine 770/cysteine 779, cysteine 786/cysteine 797, cysteine 791/cysteine 806, cysteine 808/cysteine 817, cysteine 824/cysteine 835, cysteine 829/cysteine 844, cysteine 846/cysteine 855, cysteine 925/cysteine 936, and cysteine 948/cysteine 958. One can recognise an EGF-like 15; calcium-binding domain in the interval 782-818 (NTNDCSPHPCYNSGTCVDGDNWYRCECAPGFAGPDCR). The 37-residue stretch at 820–856 (NINECQSSPCAFGATCVDEINGYQCICPPGHSGAKCH) folds into the EGF-like 16; calcium-binding domain. N-linked (GlcNAc...) asparagine glycans are attached at residues asparagine 960, asparagine 991, asparagine 1045, and asparagine 1064. Residues 1068–1093 (FLVPLLSSVLTVAWVCCLVTAFYWCV) form a helical membrane-spanning segment. The Cytoplasmic portion of the chain corresponds to 1094–1219 (RKRRRKPSSH…QSLNRMEYIV (126 aa)). Residues 1182–1219 (REEKVPQRTPTKHPNWTNKQDNRDLESAQSLNRMEYIV) form a disordered region. Polar residues predominate over residues 1189 to 1200 (RTPTKHPNWTNK).

In terms of assembly, interacts with NOTCH1. Interacts with NOTCH2 and NOTCH3. Widely expressed in a variety of tissues.

Its subcellular location is the membrane. It localises to the cell membrane. Ligand for multiple Notch receptors and involved in the mediation of Notch signaling. May be involved in cell-fate decisions during hematopoiesis. Enhances fibroblast growth factor-induced angiogenesis (in vitro). Seems to be involved in early and late stages of mammalian cardiovascular development. Inhibits myoblast differentiation. May regulate fibroblast growth factor-induced angiogenesis. This chain is Protein jagged-1 (Jag1), found in Rattus norvegicus (Rat).